The following is a 427-amino-acid chain: Enolase (427 aa).

Gln163 contacts (2R)-2-phosphoglycerate. Catalysis depends on Glu205, which acts as the Proton donor. Positions 242, 285, and 312 each coordinate Mg(2+). Residues Lys337, Arg366, Ser367, and Lys388 each coordinate (2R)-2-phosphoglycerate. Lys337 serves as the catalytic Proton acceptor.

This sequence belongs to the enolase family. It depends on Mg(2+) as a cofactor.

Its subcellular location is the cytoplasm. It localises to the secreted. It is found in the cell surface. It carries out the reaction (2R)-2-phosphoglycerate = phosphoenolpyruvate + H2O. Its pathway is carbohydrate degradation; glycolysis; pyruvate from D-glyceraldehyde 3-phosphate: step 4/5. Functionally, catalyzes the reversible conversion of 2-phosphoglycerate (2-PG) into phosphoenolpyruvate (PEP). It is essential for the degradation of carbohydrates via glycolysis. This is Enolase from Beijerinckia indica subsp. indica (strain ATCC 9039 / DSM 1715 / NCIMB 8712).